Consider the following 179-residue polypeptide: NADH dehydrogenase [ubiquinone] 1 beta subcomplex subunit 9 (179 aa).

N-acetylalanine is present on Ala2. A Phosphoserine modification is found at Ser85.

This sequence belongs to the complex I LYR family. In terms of assembly, mammalian complex I is composed of 45 different subunits.

The protein resides in the mitochondrion inner membrane. Functionally, accessory subunit of the mitochondrial membrane respiratory chain NADH dehydrogenase (Complex I), that is believed to be not involved in catalysis. Complex I functions in the transfer of electrons from NADH to the respiratory chain. The immediate electron acceptor for the enzyme is believed to be ubiquinone. The chain is NADH dehydrogenase [ubiquinone] 1 beta subcomplex subunit 9 (Ndufb9) from Mus musculus (Mouse).